A 534-amino-acid polypeptide reads, in one-letter code: Probable protein kinase UbiB (534 aa).

The helical transmembrane segment at 23 to 43 (DLLFALPLPWFLLAVRYVLPW) threads the bilayer. In terms of domain architecture, Protein kinase spans 125 to 492 (RFDVDPLASA…WKKRKDDWFL (368 aa)). Residues 131–139 (LASASVAQV) and lysine 153 contribute to the ATP site. Aspartate 288 functions as the Proton acceptor in the catalytic mechanism. The next 2 helical transmembrane spans lie at 490–510 (WFLR…AIGG) and 512–532 (LNQL…YLIV).

This sequence belongs to the ABC1 family. UbiB subfamily.

Its subcellular location is the cell inner membrane. It functions in the pathway cofactor biosynthesis; ubiquinone biosynthesis [regulation]. Its function is as follows. Is probably a protein kinase regulator of UbiI activity which is involved in aerobic coenzyme Q (ubiquinone) biosynthesis. This is Probable protein kinase UbiB from Pseudomonas fluorescens (strain SBW25).